The following is a 217-amino-acid chain: UPF0319 protein VP1009 (217 aa).

Residues 1–21 form the signal peptide; that stretch reads MRLKTWIVAFFLGLFGTTVNA.

The protein belongs to the UPF0319 family.

The chain is UPF0319 protein VP1009 from Vibrio parahaemolyticus serotype O3:K6 (strain RIMD 2210633).